The primary structure comprises 314 residues: Carbamate kinase (314 aa).

The protein belongs to the carbamate kinase family.

Its subcellular location is the cytoplasm. It catalyses the reaction hydrogencarbonate + NH4(+) + ATP = carbamoyl phosphate + ADP + H2O + H(+). It participates in metabolic intermediate metabolism; carbamoyl phosphate degradation; CO(2) and NH(3) from carbamoyl phosphate: step 1/1. The polypeptide is Carbamate kinase (arcC) (Latilactobacillus sakei (Lactobacillus sakei)).